A 285-amino-acid polypeptide reads, in one-letter code: Mitochondrial substrate carrier family protein S (285 aa).

The Mitochondrial intermembrane segment spans residues 1–9 (MSTERGLKD). 3 Solcar repeats span residues 4-87 (ERGL…MKVL), 96-183 (LTVG…CKRY), and 197-283 (LNLP…VIKL). Residues 10–30 (SIAGTVAGAACLFTGHPFDTI) traverse the membrane as a helical segment. Residues 31-61 (RVRLQTSNTPIGIMECFRNTIKYEGFSGLYK) lie on the Mitochondrial matrix side of the membrane. Residues 62–82 (GVTSPLFGMMFETAVLFAGYG) traverse the membrane as a helical segment. Topologically, residues 83–101 (QMKVLLQKDENTPLTVGQC) are mitochondrial intermembrane. Residues 102–122 (AIAGGFAGVGASVVLTPVELV) form a helical membrane-spanning segment. The Mitochondrial matrix portion of the chain corresponds to 123–150 (KCRLQVQTTGPQKYKGSLDCLVQILKEG). Residues 151-172 (GIRGAYRGFTPTIAREFVGNMA) traverse the membrane as a helical segment. Over 173–199 (FFSTYETCKRYFKNKENKPNDDDELNL) the chain is Mitochondrial intermembrane. The chain crosses the membrane as a helical span at residues 200-220 (PALIISGGLGGMAYWTVLYPV). The Mitochondrial matrix segment spans residues 221-258 (DVAKSKIQISEGAGPSPSIVKVLKEIYSKEGVKGLFRG). The helical transmembrane segment at 259-277 (YTPTIIRSFPANAAMFSVY) threads the bilayer. Residues 278–285 (ELVIKLLG) lie on the Mitochondrial intermembrane side of the membrane.

Belongs to the mitochondrial carrier (TC 2.A.29) family.

It is found in the mitochondrion inner membrane. Functionally, mitochondrial solute carriers shuttle metabolites, nucleotides, and cofactors through the mitochondrial inner membrane. Mediates the transport of acylcarnitines of different length across the mitochondrial inner membrane from the cytosol to the mitochondrial matrix for their oxidation by the mitochondrial fatty acid-oxidation pathway. In Dictyostelium discoideum (Social amoeba), this protein is Mitochondrial substrate carrier family protein S (mcfS).